The following is a 238-amino-acid chain: Uridylate kinase (238 aa).

Residue 12–15 (KLSG) participates in ATP binding. The involved in allosteric activation by GTP stretch occupies residues 20 to 25 (GEKGFG). Gly-54 contacts UMP. Residues Gly-55 and Arg-59 each contribute to the ATP site. Residues Asp-74 and 135-142 (TGSPYFST) each bind UMP. The ATP site is built by Asn-163, Tyr-169, and Asp-172.

This sequence belongs to the UMP kinase family. As to quaternary structure, homohexamer.

It is found in the cytoplasm. It catalyses the reaction UMP + ATP = UDP + ADP. The protein operates within pyrimidine metabolism; CTP biosynthesis via de novo pathway; UDP from UMP (UMPK route): step 1/1. Its activity is regulated as follows. Allosterically activated by GTP. Inhibited by UTP. Its function is as follows. Catalyzes the reversible phosphorylation of UMP to UDP. The chain is Uridylate kinase from Lactococcus lactis subsp. lactis (strain IL1403) (Streptococcus lactis).